Reading from the N-terminus, the 182-residue chain is Nucleoid-associated protein At2g24020, chloroplastic (182 aa).

The N-terminal 48 residues, 1–48 (MASMAATTNFTKSMLFPFSHVSGNASLNSQRRTWPKQYKSKNGYRSLR), are a transit peptide targeting the chloroplast.

This sequence belongs to the YbaB/EbfC family. In terms of assembly, homodimer. Interacts with ALB3 and ALB4.

The protein localises to the plastid. Its subcellular location is the chloroplast stroma. In terms of biological role, participates with ALB4 in thylakoid protein targeting. May function with specific subset of thylakoidal proteins. Binds to DNA and alters its conformation. May be involved in regulation of gene expression, nucleoid organization and DNA protection. The chain is Nucleoid-associated protein At2g24020, chloroplastic from Arabidopsis thaliana (Mouse-ear cress).